Consider the following 275-residue polypeptide: Cis-toluene dihydrodiol dehydrogenase (275 aa).

NAD(+) is bound at residue 9–33; the sequence is LVTGGGAGLGRAIVDRYVAEGARVA. Substrate is bound at residue Ser142. The Proton acceptor role is filled by Tyr155.

The protein belongs to the short-chain dehydrogenases/reductases (SDR) family.

It catalyses the reaction (1S,2R)-3-methylcyclohexa-3,5-diene-1,2-diol + NAD(+) = 3-methylcatechol + NADH + H(+). Its pathway is xenobiotic degradation; toluene degradation. The sequence is that of Cis-toluene dihydrodiol dehydrogenase (todD) from Pseudomonas putida (strain ATCC 700007 / DSM 6899 / JCM 31910 / BCRC 17059 / LMG 24140 / F1).